We begin with the raw amino-acid sequence, 190 residues long: dCTP deaminase (190 aa).

DCTP is bound at residue Lys-107 to Arg-112. Residue Glu-133 is the Proton donor/acceptor of the active site. 3 residues coordinate dCTP: Gln-152, Tyr-166, and Gln-176.

This sequence belongs to the dCTP deaminase family. As to quaternary structure, homotrimer.

The catalysed reaction is dCTP + H2O + H(+) = dUTP + NH4(+). It participates in pyrimidine metabolism; dUMP biosynthesis; dUMP from dCTP (dUTP route): step 1/2. Functionally, catalyzes the deamination of dCTP to dUTP. The sequence is that of dCTP deaminase from Campylobacter hominis (strain ATCC BAA-381 / DSM 21671 / CCUG 45161 / LMG 19568 / NCTC 13146 / CH001A).